The following is a 102-amino-acid chain: ATP-dependent Clp protease adapter protein ClpS (102 aa).

This sequence belongs to the ClpS family. Binds to the N-terminal domain of the chaperone ClpA.

Its function is as follows. Involved in the modulation of the specificity of the ClpAP-mediated ATP-dependent protein degradation. In Shewanella sp. (strain ANA-3), this protein is ATP-dependent Clp protease adapter protein ClpS.